Consider the following 63-residue polypeptide: Beta-defensin 4 (63 aa).

The signal sequence occupies residues 1 to 22 (MRIHYLLFSFLLVLLSPLSAFT). Gln-23 is modified (pyrrolidone carboxylic acid). 3 disulfides stabilise this stretch: Cys-31–Cys-59, Cys-38–Cys-52, and Cys-42–Cys-60.

The protein belongs to the beta-defensin family. Highly expressed in lung.

The protein resides in the secreted. In terms of biological role, exhibits antimicrobial activity against Gram-negative bacteria and Gram-positive bacteria. May act as a ligand for C-C chemokine receptor CCR6. Binds to CCR6 and induces chemotactic activity of CCR6-expressing cells. The sequence is that of Beta-defensin 4 (Defb4) from Rattus norvegicus (Rat).